The primary structure comprises 78 residues: Large ribosomal subunit protein bL28 (78 aa).

Belongs to the bacterial ribosomal protein bL28 family.

This is Large ribosomal subunit protein bL28 from Synechococcus sp. (strain WH7803).